A 357-amino-acid chain; its full sequence is S-adenosylmethionine:tRNA ribosyltransferase-isomerase (357 aa).

This sequence belongs to the QueA family. As to quaternary structure, monomer.

It localises to the cytoplasm. The enzyme catalyses 7-aminomethyl-7-carbaguanosine(34) in tRNA + S-adenosyl-L-methionine = epoxyqueuosine(34) in tRNA + adenine + L-methionine + 2 H(+). Its pathway is tRNA modification; tRNA-queuosine biosynthesis. Functionally, transfers and isomerizes the ribose moiety from AdoMet to the 7-aminomethyl group of 7-deazaguanine (preQ1-tRNA) to give epoxyqueuosine (oQ-tRNA). The polypeptide is S-adenosylmethionine:tRNA ribosyltransferase-isomerase (Proteus mirabilis (strain HI4320)).